We begin with the raw amino-acid sequence, 336 residues long: Fructose-1,6-bisphosphatase class 1 (336 aa).

Positions 90, 112, 114, and 115 each coordinate Mg(2+). Residues 115-118, asparagine 211, and lysine 277 contribute to the substrate site; that span reads DGSS. Residue glutamate 283 participates in Mg(2+) binding.

Belongs to the FBPase class 1 family. Homotetramer. Mg(2+) serves as cofactor.

The protein resides in the cytoplasm. It catalyses the reaction beta-D-fructose 1,6-bisphosphate + H2O = beta-D-fructose 6-phosphate + phosphate. It participates in carbohydrate biosynthesis; gluconeogenesis. This chain is Fructose-1,6-bisphosphatase class 1, found in Pseudomonas fluorescens (strain ATCC BAA-477 / NRRL B-23932 / Pf-5).